Here is a 121-residue protein sequence, read N- to C-terminus: Methylglyoxal synthase (121 aa).

One can recognise an MGS-like domain in the interval 1-121 (MMKVALIAHD…SAELFLRALN (121 aa)). Substrate contacts are provided by residues His9, Lys13, 35–38 (TGTT), and 55–56 (SG). Residue Asp61 is the Proton donor/acceptor of the active site. Residue His88 coordinates substrate.

Belongs to the methylglyoxal synthase family.

It catalyses the reaction dihydroxyacetone phosphate = methylglyoxal + phosphate. Catalyzes the formation of methylglyoxal from dihydroxyacetone phosphate. The protein is Methylglyoxal synthase of Carboxydothermus hydrogenoformans (strain ATCC BAA-161 / DSM 6008 / Z-2901).